The chain runs to 166 residues: Lymphocyte antigen 6G6e (166 aa).

An N-terminal signal peptide occupies residues 1-18; it reads MGPSSAFLGVLFLSGTLG. The UPAR/Ly6 domain occupies 28-151; sequence LRCYTCSFAK…PPPNLPLMTL (124 aa). 4 disulfides stabilise this stretch: Cys-30-Cys-52, Cys-33-Cys-39, Cys-110-Cys-129, and Cys-130-Cys-135.

As to quaternary structure, interacts with CHRNA4. O-glycosylated. Contains sialic acid residues.

The protein localises to the cell surface. Its subcellular location is the cell membrane. The protein resides in the cell projection. Functionally, believed to act as a modulator of nicotinic acetylcholine receptors (nAChRs) activity. In vitro potentiates alpha-3:beta-4-containing nAChRs maximum response by increasing peak current and slowing down receptor desensitization; the activity is dependent on its cell surface localization. In Mus musculus (Mouse), this protein is Lymphocyte antigen 6G6e (Ly6g6e).